A 94-amino-acid chain; its full sequence is MTKSELIERLAGQQSHVPTKVVEDAVKEMLEHMAGTLAEGERIEIRGFGSFSLHYRAPRVGRNPKTGAKVELEGKYVPHFKPGKELRDRANIYG.

It belongs to the bacterial histone-like protein family. In terms of assembly, heterodimer of an alpha and a beta chain.

Functionally, this protein is one of the two subunits of integration host factor, a specific DNA-binding protein that functions in genetic recombination as well as in transcriptional and translational control. The chain is Integration host factor subunit beta from Yersinia enterocolitica serotype O:8 / biotype 1B (strain NCTC 13174 / 8081).